The primary structure comprises 1050 residues: Calmodulin-binding transcription activator 2 (1050 aa).

A DNA-binding region (CG-1) is located at residues isoleucine 15–serine 141. 2 stretches are compositionally biased toward polar residues: residues serine 141–leucine 171 and serine 183–proline 196. Disordered regions lie at residues serine 141–proline 196 and asparagine 223–valine 246. ANK repeat units follow at residues aspartate 661–phenylalanine 690 and asparagine 694–alanine 723. IQ domains follow at residues valine 870–lysine 899 and isoleucine 893–leucine 922. A calmodulin-binding region spans residues tryptophan 918–phenylalanine 940. Residues glutamine 957–methionine 985 adopt a coiled-coil conformation. Phosphoserine is present on serine 984.

It belongs to the CAMTA family. As to expression, expressed in roots, stems, old leaves, petals, sepals, top of carpels, stigmas, stamen filaments, anthers and siliques, but not in pollen.

It localises to the nucleus. Transcription activator that binds to the DNA consensus sequence 5'-[ACG]CGCG[GTC]-3'. Regulates transcriptional activity in response to calcium signals. Binds calmodulin in a calcium-dependent manner. Involved in freezing tolerance in association with CAMTA1 and CAMTA3. Contributes together with CAMTA1 and CAMTA3 to the positive regulation of the cold-induced expression of DREB1A/CBF3, DREB1B/CBF1 and DREB1C/CBF2. Involved together with CAMTA3 and CAMTA4 in the positive regulation of a general stress response. Involved in tolerance to aluminum. Binds to the promoter of ALMT1 transporter and contributes to the positive regulation of aluminum-induced expression of ALMT1. This Arabidopsis thaliana (Mouse-ear cress) protein is Calmodulin-binding transcription activator 2.